The sequence spans 139 residues: Transcription antitermination protein NusB (139 aa).

This sequence belongs to the NusB family.

In terms of biological role, involved in transcription antitermination. Required for transcription of ribosomal RNA (rRNA) genes. Binds specifically to the boxA antiterminator sequence of the ribosomal RNA (rrn) operons. The polypeptide is Transcription antitermination protein NusB (Pectobacterium carotovorum subsp. carotovorum (strain PC1)).